We begin with the raw amino-acid sequence, 383 residues long: Queuine tRNA-ribosyltransferase (383 aa).

Aspartate 92 functions as the Proton acceptor in the catalytic mechanism. Residues 92-96 (DSGGF), aspartate 146, glutamine 190, and glycine 217 contribute to the substrate site. The segment at 248–254 (GVGKPED) is RNA binding. The active-site Nucleophile is aspartate 267. The segment at 272–276 (TRNAR) is RNA binding; important for wobble base 34 recognition. Zn(2+) contacts are provided by cysteine 310, cysteine 312, cysteine 315, and histidine 341.

It belongs to the queuine tRNA-ribosyltransferase family. Homodimer. Within each dimer, one monomer is responsible for RNA recognition and catalysis, while the other monomer binds to the replacement base PreQ1. Zn(2+) is required as a cofactor.

The enzyme catalyses 7-aminomethyl-7-carbaguanine + guanosine(34) in tRNA = 7-aminomethyl-7-carbaguanosine(34) in tRNA + guanine. It functions in the pathway tRNA modification; tRNA-queuosine biosynthesis. Functionally, catalyzes the base-exchange of a guanine (G) residue with the queuine precursor 7-aminomethyl-7-deazaguanine (PreQ1) at position 34 (anticodon wobble position) in tRNAs with GU(N) anticodons (tRNA-Asp, -Asn, -His and -Tyr). Catalysis occurs through a double-displacement mechanism. The nucleophile active site attacks the C1' of nucleotide 34 to detach the guanine base from the RNA, forming a covalent enzyme-RNA intermediate. The proton acceptor active site deprotonates the incoming PreQ1, allowing a nucleophilic attack on the C1' of the ribose to form the product. After dissociation, two additional enzymatic reactions on the tRNA convert PreQ1 to queuine (Q), resulting in the hypermodified nucleoside queuosine (7-(((4,5-cis-dihydroxy-2-cyclopenten-1-yl)amino)methyl)-7-deazaguanosine). The protein is Queuine tRNA-ribosyltransferase of Psychrobacter sp. (strain PRwf-1).